A 277-amino-acid chain; its full sequence is S-formylglutathione hydrolase FrmB (277 aa).

Catalysis depends on charge relay system residues Ser145, Asp221, and His254.

The protein belongs to the esterase D family.

The catalysed reaction is S-formylglutathione + H2O = formate + glutathione + H(+). Serine hydrolase involved in the detoxification of formaldehyde. Hydrolyzes S-formylglutathione to glutathione and formate. This Escherichia coli O6:K15:H31 (strain 536 / UPEC) protein is S-formylglutathione hydrolase FrmB (frmB).